A 274-amino-acid polypeptide reads, in one-letter code: Type II restriction enzyme HgiEI (274 aa).

Belongs to the TdeIII type II restriction endonuclease family.

The enzyme catalyses Endonucleolytic cleavage of DNA to give specific double-stranded fragments with terminal 5'-phosphates.. Functionally, a P subtype restriction enzyme that recognizes the double-stranded sequence 5'-GGWCC-3' and cleaves after G-1. This system is more active than isoschizomeric RM.HgiBI. This chain is Type II restriction enzyme HgiEI, found in Herpetosiphon aurantiacus (Herpetosiphon giganteus).